A 308-amino-acid chain; its full sequence is tRNA dimethylallyltransferase (308 aa).

8 to 15 (GPTGTGKS) is an ATP binding site. 10-15 (TGTGKS) contributes to the substrate binding site.

This sequence belongs to the IPP transferase family. In terms of assembly, monomer. Requires Mg(2+) as cofactor.

The catalysed reaction is adenosine(37) in tRNA + dimethylallyl diphosphate = N(6)-dimethylallyladenosine(37) in tRNA + diphosphate. Its function is as follows. Catalyzes the transfer of a dimethylallyl group onto the adenine at position 37 in tRNAs that read codons beginning with uridine, leading to the formation of N6-(dimethylallyl)adenosine (i(6)A). This Mycolicibacterium vanbaalenii (strain DSM 7251 / JCM 13017 / BCRC 16820 / KCTC 9966 / NRRL B-24157 / PYR-1) (Mycobacterium vanbaalenii) protein is tRNA dimethylallyltransferase.